Here is a 441-residue protein sequence, read N- to C-terminus: Polycomb protein EED (441 aa).

Residues 1–72 (MSEREVSTAP…PGRKSWGKGK (72 aa)) form a disordered region. N-acetylserine is present on Ser2. Residues Ser2 and Ser34 each carry the phosphoserine modification. Over residues 45–61 (ESGTNTERPDTPTNTPN) the composition is skewed to polar residues. Position 55 is a phosphothreonine (Thr55). Lys66 is modified (N6,N6,N6-trimethyllysine; alternate). Residue Lys66 is modified to N6,N6-dimethyllysine; alternate. N6-methyllysine; alternate is present on Lys66. The interval 81 to 441 (SFKCVNSLKE…ASIWRWDRLR (361 aa)) is interaction with EZH2. 4 WD repeats span residues 91 to 134 (DHNQ…EIRL), 142 to 185 (DADE…CIKH), 188 to 228 (GHGN…LVAI), and 234 to 275 (GHRD…NAIK). 2 required for interaction with the matrix protein MA of HIV-1 regions span residues 149–303 (TCAW…STRD) and 301–441 (TRDI…DRLR). N6,N6,N6-trimethyllysine; alternate is present on residues Lys197, Lys268, and Lys284. N6,N6-dimethyllysine; alternate occurs at positions 197, 268, and 284. Lys197, Lys268, and Lys284 each carry N6-methyllysine; alternate. WD repeat units lie at residues 304 to 341 (IHRN…DDID), 359 to 399 (SQCD…PHKA), and 408 to 441 (KCGA…DRLR).

Belongs to the WD repeat ESC family. Component of the PRC2/EED-EZH2 complex, which includes EED, EZH2, SUZ12, RBBP4 and RBBP7 and possibly AEBP2. The minimum components required for methyltransferase activity of the PRC2/EED-EZH2 complex are EED, EZH2 and SUZ12. Component of the PRC2/EED-EZH1 complex, which includes EED, EZH1, SUZ12, RBBP4 and AEBP2. The PRC2 complex may also interact with DNMT1, DNMT3A, DNMT3B and PHF1 via the EZH2 subunit and with SIRT1 via the SUZ12 subunit. Interacts with HDAC, HDAC2, histone H1 and YY1. May interact with ITGA4, ITGAE and ITGB7. Interacts with CDYL. Interacts with BMAL1. Interacts with KMT2A/MLL1. As to quaternary structure, (Microbial infection) May interact with the MA protein of HIV-1. Methylated. Binding to histone H1 'Lys-26' promotes mono-, di-, and trimethylation of internal lysines. In terms of tissue distribution, expressed in brain, colon, heart, kidney, liver, lung, muscle, ovary, peripheral blood leukocytes, pancreas, placenta, prostate, spleen, small intestine, testis, thymus and uterus. Appears to be overexpressed in breast and colon cancer.

The protein resides in the nucleus. It localises to the chromosome. Functionally, polycomb group (PcG) protein. Component of the PRC2/EED-EZH2 complex, which methylates 'Lys-9' and 'Lys-27' of histone H3, leading to transcriptional repression of the affected target gene. Also recognizes 'Lys-26' trimethylated histone H1 with the effect of inhibiting PRC2 complex methyltransferase activity on nucleosomal histone H3 'Lys-27', whereas H3 'Lys-27' recognition has the opposite effect, enabling the propagation of this repressive mark. The PRC2/EED-EZH2 complex may also serve as a recruiting platform for DNA methyltransferases, thereby linking two epigenetic repression systems. Genes repressed by the PRC2/EED-EZH2 complex include HOXC8, HOXA9, MYT1 and CDKN2A. In Homo sapiens (Human), this protein is Polycomb protein EED.